The primary structure comprises 497 residues: Bloodstream-specific protein 2 (497 aa).

The N-terminal stretch at 1 to 14 (MRAIFLVALALATM) is a signal peptide. The Thioredoxin 1 domain maps to 15–124 (RESTAESLKL…IIKYIKANVG (110 aa)). A glycan (N-linked (GlcNAc...) asparagine) is linked at asparagine 30. Cysteines 48 and 51 form a disulfide. 6 N-linked (GlcNAc...) asparagine glycosylation sites follow: asparagine 63, asparagine 85, asparagine 153, asparagine 154, asparagine 250, and asparagine 278. The 122-residue stretch at 334–455 (EPTIKSLPVP…VYEFVRKHVT (122 aa)) folds into the Thioredoxin 2 domain. Residues cysteine 378 and cysteine 381 each act as nucleophile in the active site. The cysteines at positions 378 and 381 are disulfide-linked. N-linked (GlcNAc...) asparagine glycans are attached at residues asparagine 413, asparagine 465, asparagine 476, asparagine 482, asparagine 485, and asparagine 488. Residues 461-497 (EKPANVTEEKKSEEENKSSKSNESNDSNESNVDKQDL) are disordered. Residues 467-480 (TEEKKSEEENKSSK) are compositionally biased toward basic and acidic residues. The span at 481 to 490 (SNESNDSNES) shows a compositional bias: low complexity.

This sequence belongs to the protein disulfide isomerase family.

The polypeptide is Bloodstream-specific protein 2 (BS2) (Trypanosoma brucei brucei).